Here is a 554-residue protein sequence, read N- to C-terminus: Bifunctional epoxide hydrolase 2 (554 aa).

A phosphatase region spans residues 1 to 224 (MALRVAAFDL…KVTGTQFPEA (224 aa)). Residues D9 and D11 each coordinate Mg(2+). Residue K55 is modified to N6-succinyllysine. 123 to 124 (TN) serves as a coordination point for phosphate. K176 carries the N6-acetyllysine; alternate modification. K176 is subject to N6-succinyllysine; alternate. D185 is a Mg(2+) binding site. K191 and K215 each carry N6-acetyllysine. Positions 233–554 (NDVSHGYVTV…IQNPSVTSKI (322 aa)) are epoxide hydrolase. Positions 257-530 (PAICLCHGFP…CGHWTQIEKP (274 aa)) constitute an AB hydrolase-1 domain. D333 functions as the Nucleophile in the catalytic mechanism. Residue S368 is modified to Phosphoserine. Y381 provides a ligand contact to substrate. N6-succinyllysine is present on residues K420 and K454. The Proton donor role is filled by Y465. Position 504 is an N6-succinyllysine (K504). The S-(15-deoxy-Delta12,14-prostaglandin J2-9-yl)cysteine moiety is linked to residue C521. Catalysis depends on H523, which acts as the Proton acceptor. Residues 552 to 554 (SKI) carry the Microbody targeting signal motif. An N6-succinyllysine modification is found at K553.

The protein belongs to the AB hydrolase superfamily. Epoxide hydrolase family. As to quaternary structure, homodimer. Mg(2+) is required as a cofactor. Post-translationally, the covalent modification of cysteine by 15-deoxy-Delta12,14-prostaglandin-J2 is autocatalytic and reversible. It may occur as an alternative to other cysteine modifications, such as S-nitrosylation and S-palmitoylation.

The protein localises to the cytoplasm. The protein resides in the peroxisome. The catalysed reaction is an epoxide + H2O = an ethanediol. It carries out the reaction (9S,10S)-10-hydroxy-9-(phosphooxy)octadecanoate + H2O = (9S,10S)-9,10-dihydroxyoctadecanoate + phosphate. It catalyses the reaction 8-hydroxy-(11S,12S)-epoxy-(5Z,9E,14Z)-eicosatrienoate + H2O = (8,11R,12S)-trihydroxy-(5Z,9E,14Z)-eicosatrienoate. The enzyme catalyses 10-hydroxy-(11S,12S)-epoxy- (5Z,8Z,14Z)-eicosatrienoate + H2O = (10,11S,12R)-trihydroxy-(5Z,8Z,14Z)-eicosatrienoate. The catalysed reaction is 12-phosphooxy-(9Z)-octadecenoate + H2O = 12-hydroxy-(9Z)-octadecenoate + phosphate. It carries out the reaction 12-phosphooxy-(9E)-octadecenoate + H2O = 12-hydroxy-(9E)-octadecenoate + phosphate. It catalyses the reaction 12-(phosphooxy)octadecanoate + H2O = 12-hydroxyoctadecanoate + phosphate. The enzyme catalyses 8,9-epoxy-(5Z,11Z,14Z)-eicosatrienoate + H2O = 8,9-dihydroxy-(5Z,11Z,14Z)-eicosatrienoate. The catalysed reaction is 11,12-epoxy-(5Z,8Z,14Z)-eicosatrienoate + H2O = 11,12-dihydroxy-(5Z,8Z,14Z)-eicosatrienoate. It carries out the reaction 14,15-epoxy-(5Z,8Z,11Z)-eicosatrienoate + H2O = 14,15-dihydroxy-(5Z,8Z,11Z)-eicosatrienoate. It catalyses the reaction 9,10-epoxy-(12Z)-octadecenoate + H2O = 9,10-dihydroxy-(12Z)-octadecenoate. The enzyme catalyses 1-tetradecanoyl-sn-glycerol 3-phosphate + H2O = 1-tetradecanoyl-sn-glycerol + phosphate. The catalysed reaction is 1-octadecanoyl-sn-glycero-3-phosphate + H2O = 1-octadecanoyl-sn-glycerol + phosphate. It carries out the reaction 1-(5Z,8Z,11Z,14Z-eicosatetraenoyl)-sn-glycero-3-phosphate + H2O = 1-(5Z,8Z,11Z,14Z-eicosatetraenoyl)-sn-glycerol + phosphate. It catalyses the reaction 1-hexadecanoyl-sn-glycero-3-phosphate + H2O = 1-hexadecanoyl-sn-glycerol + phosphate. The enzyme catalyses 1-(9Z-octadecenoyl)-sn-glycero-3-phosphate + H2O = 1-(9Z-octadecenoyl)-sn-glycerol + phosphate. The catalysed reaction is (8S,9R)-epoxy-(5Z,11Z,14Z)-eicosatrienoate + H2O = (8S,9S)-dihydroxy-(5Z,11Z,14Z)-eicosatrienoate. It carries out the reaction (11S,12R)-epoxy-(5Z,8Z,14Z)-eicosatrienoate + H2O = (11R,12R)-dihydroxy-(5Z,8Z,14Z)-eicosatrienoate. It catalyses the reaction (11S,12R)-epoxy-(5Z,8Z,14Z)-eicosatrienoate + H2O = (11S,12S)-dihydroxy-(5Z,8Z,14Z)-eicosatrienoate. The enzyme catalyses (14S,15R)-epoxy-(5Z,8Z,11Z)-eicosatrienoate + H2O = (14R,15R)-dihydroxy-(5Z,8Z,11Z)-eicosatrienoate. The catalysed reaction is (14S,15R)-epoxy-(5Z,8Z,11Z)-eicosatrienoate + H2O = (14S,15S)-dihydroxy-(5Z,8Z,11Z)-eicosatrienoate. It carries out the reaction (11R,12S)-epoxy-(5Z,8Z,14Z)-eicosatrienoate + H2O = (11S,12S)-dihydroxy-(5Z,8Z,14Z)-eicosatrienoate. It catalyses the reaction (11R,12S)-epoxy-(5Z,8Z,14Z)-eicosatrienoate + H2O = (11R,12R)-dihydroxy-(5Z,8Z,14Z)-eicosatrienoate. The enzyme catalyses (8S,9R)-epoxy-(5Z,11Z,14Z)-eicosatrienoate + H2O = (8R,9R)-dihydroxy-(5Z,11Z,14Z)-eicosatrienoate. The catalysed reaction is (14R,15S)-epoxy-(5Z,8Z,11Z)-eicosatrienoate + H2O = (14R,15R)-dihydroxy-(5Z,8Z,11Z)-eicosatrienoate. Inhibited by 1-(1-acetylpiperidin-4-yl)-3-(4-(trifl uoromethoxy)phenyl)urea (TPAU), 1-cyclohexyl-3-dodecylurea (CDU), 12-(3-adamantan-1-yl-ureido)-dodecanoic acid (AUDA), 1-((3S, 5S, 7S)-adamantan-1-yl)-3-(5-(2-(2-ethoxyethoxy) ethoxy)pentyl)urea (AEPU), N-adamantyl-N[']-cyclohexyl urea (ACU), 4-(((1S, 4S)-4-(3-((3S, 5S, 7S)-adamantan-1-yl) ureido)cyclohexyl)oxy)benzoic acid (c-AUCB), 4-(((1R, 4R)-4-(3-((3S, 5S, 7S)-adamantan-1-yl)ureido)cyclohexyl)oxy)benzoic acid (t-AUCB), 4-(((1R, 4R)-4-(3-(4(trifluoromethoxy)phenyl)ureido)cyclohexyl)oxy)benzoic acid (t-TAUCB) and to a lesser extent by 8-(3-((3S, 5S, 7S)-adamantan-1-yl)ureido) octanoic acid (AUOA). Phosphatase activity is inhibited by dodecyl-phosphate, phospholipids such as phospho-lysophosphatidic acids and fatty acids such as palmitic acid and lauric acid. Functionally, bifunctional enzyme. The C-terminal domain has epoxide hydrolase activity and acts on epoxides (alkene oxides, oxiranes) and arene oxides. Plays a role in xenobiotic metabolism by degrading potentially toxic epoxides. Also determines steady-state levels of physiological mediators. The N-terminal domain has lipid phosphatase activity, with the highest activity towards threo-9,10-phosphonooxy-hydroxy-octadecanoic acid, followed by erythro-9,10-phosphonooxy-hydroxy-octadecanoic acid, 12-phosphonooxy-octadec-9Z-enoic acid and 12-phosphonooxy-octadec-9E-enoic acid. In terms of biological role, bifunctional enzyme. The C-terminal domain has epoxide hydrolase activity and acts on epoxides (alkene oxides, oxiranes) and arene oxides. Plays a role in xenobiotic metabolism by degrading potentially toxic epoxides. Also determines steady-state levels of physiological mediators. Bifunctional enzyme. The N-terminal domain has lipid phosphatase activity, with the highest activity towards threo-9,10-phosphonooxy-hydroxy-octadecanoic acid, followed by erythro-9,10-phosphonooxy-hydroxy-octadecanoic acid, 12-phosphonooxy-octadec-9Z-enoic acid and 12-phosphonooxy-octadec-9E-enoic acid. Has phosphatase activity toward lyso-glycerophospholipids with also some lower activity toward lysolipids of sphingolipid and isoprenoid phosphates. This is Bifunctional epoxide hydrolase 2 from Rattus norvegicus (Rat).